Consider the following 465-residue polypeptide: Cysteine--tRNA ligase (465 aa).

Cys30 contacts Zn(2+). Positions 32 to 42 (MTVYDYCHVGH) match the 'HIGH' region motif. The Zn(2+) site is built by Cys214, His239, and Glu243. The short motif at 271–275 (KMSKS) is the 'KMSKS' region element. Lys274 contacts ATP.

It belongs to the class-I aminoacyl-tRNA synthetase family. Monomer. The cofactor is Zn(2+).

The protein localises to the cytoplasm. The enzyme catalyses tRNA(Cys) + L-cysteine + ATP = L-cysteinyl-tRNA(Cys) + AMP + diphosphate. The polypeptide is Cysteine--tRNA ligase (Ralstonia nicotianae (strain ATCC BAA-1114 / GMI1000) (Ralstonia solanacearum)).